Here is a 3313-residue protein sequence, read N- to C-terminus: PHD finger protein rhinoceros (3313 aa).

The segment covering M1–H16 has biased composition (basic residues). Residues M1 to Q136 form a disordered region. 2 stretches are compositionally biased toward low complexity: residues P42–G71 and L100–S134. Residues N323–G373 form a PHD-type 1 zinc finger. A C2HC pre-PHD-type zinc finger spans residues T375 to V409. The segment at L433–G487 adopts a PHD-type 2; degenerate zinc-finger fold. 17 disordered regions span residues M453–Q526, L708–A1076, K1107–H1842, A1961–N2033, P2104–R2136, A2145–T2164, A2219–G2252, P2353–P2374, V2398–M2514, T2563–V2587, A2647–A2679, S2827–R2871, L2888–R2954, Y2978–P2998, D3017–T3077, K3144–E3233, and Y3259–R3313. Basic and acidic residues predominate over residues K512–Q526. Positions K735–P749 are enriched in polar residues. Over residues S760 to A772 the composition is skewed to low complexity. Residues G792–K802 show a composition bias toward polar residues. 2 stretches are compositionally biased toward low complexity: residues T803–I861 and E894–S912. A compositionally biased stretch (basic and acidic residues) spans Q919–G934. Over residues T942–S955 the composition is skewed to polar residues. Over residues T956–T972 the composition is skewed to low complexity. The segment covering E994–E1003 has biased composition (acidic residues). Low complexity predominate over residues A1015 to G1025. The span at V1058–R1072 shows a compositional bias: polar residues. 2 stretches are compositionally biased toward basic and acidic residues: residues A1159–S1168 and K1178–S1205. Over residues E1250–S1266 the composition is skewed to low complexity. The segment covering L1285 to E1301 has biased composition (polar residues). 3 stretches are compositionally biased toward low complexity: residues A1308–T1324, S1377–D1404, and P1451–T1464. The segment covering T1475–K1485 has biased composition (polar residues). Residues S1551–Q1579 show a composition bias toward basic and acidic residues. Positions P1638–P1650 are enriched in acidic residues. Polar residues predominate over residues T1667 to A1678. A compositionally biased stretch (pro residues) spans P1691–T1702. The segment covering S1722–S1734 has biased composition (basic residues). Positions H1744–Y1773 form a coiled coil. A compositionally biased stretch (basic and acidic residues) spans E1753–E1765. 2 stretches are compositionally biased toward polar residues: residues S1771–A1781 and D1796–D1805. The span at Q1806–L1819 shows a compositional bias: low complexity. Polar residues predominate over residues S1823–I1832. A compositionally biased stretch (low complexity) spans Q1965 to Q1984. 2 stretches are compositionally biased toward polar residues: residues S1985–S1999 and M2007–L2018. Low complexity predominate over residues T2019–N2033. The segment covering T2106 to L2118 has biased composition (polar residues). 2 stretches are compositionally biased toward low complexity: residues S2148–S2157 and Q2222–Q2242. Residues P2439–A2451 are compositionally biased toward pro residues. Over residues G2479–R2488 the composition is skewed to gly residues. A compositionally biased stretch (low complexity) spans P2658–A2679. A compositionally biased stretch (gly residues) spans A2891–S2900. Polar residues predominate over residues C2909–A2924. Residues K2935–T2946 show a composition bias toward basic and acidic residues. Residues D3017–K3026 are compositionally biased toward basic and acidic residues. Residues K3046–Q3065 are compositionally biased toward basic residues. Polar residues predominate over residues T3179–A3198. The segment covering S3268–N3290 has biased composition (low complexity). Over residues G3291–S3302 the composition is skewed to gly residues.

It belongs to the JADE family.

It localises to the nucleus. May function as a negative regulator of the EGFR/Ras/MAPK signaling pathway during eye development. This chain is PHD finger protein rhinoceros (rno), found in Drosophila pseudoobscura pseudoobscura (Fruit fly).